We begin with the raw amino-acid sequence, 484 residues long: tRNA sulfurtransferase (484 aa).

The 105-residue stretch at 63-167 (REMIERLTCT…LDRLFVIHRQ (105 aa)) folds into the THUMP domain. ATP-binding positions include 185–186 (LM), K267, G289, and Q298. C346 and C457 form a disulfide bridge. In terms of domain architecture, Rhodanese spans 405 to 483 (VLPGQIVIDI…GHTNVRVYRP (79 aa)). Residue C457 is the Cysteine persulfide intermediate of the active site.

It belongs to the ThiI family.

It localises to the cytoplasm. It carries out the reaction [ThiI sulfur-carrier protein]-S-sulfanyl-L-cysteine + a uridine in tRNA + 2 reduced [2Fe-2S]-[ferredoxin] + ATP + H(+) = [ThiI sulfur-carrier protein]-L-cysteine + a 4-thiouridine in tRNA + 2 oxidized [2Fe-2S]-[ferredoxin] + AMP + diphosphate. The enzyme catalyses [ThiS sulfur-carrier protein]-C-terminal Gly-Gly-AMP + S-sulfanyl-L-cysteinyl-[cysteine desulfurase] + AH2 = [ThiS sulfur-carrier protein]-C-terminal-Gly-aminoethanethioate + L-cysteinyl-[cysteine desulfurase] + A + AMP + 2 H(+). It functions in the pathway cofactor biosynthesis; thiamine diphosphate biosynthesis. Its function is as follows. Catalyzes the ATP-dependent transfer of a sulfur to tRNA to produce 4-thiouridine in position 8 of tRNAs, which functions as a near-UV photosensor. Also catalyzes the transfer of sulfur to the sulfur carrier protein ThiS, forming ThiS-thiocarboxylate. This is a step in the synthesis of thiazole, in the thiamine biosynthesis pathway. The sulfur is donated as persulfide by IscS. This Pseudomonas paraeruginosa (strain DSM 24068 / PA7) (Pseudomonas aeruginosa (strain PA7)) protein is tRNA sulfurtransferase.